The following is a 238-amino-acid chain: Large ribosomal subunit protein uL1 (238 aa).

This sequence belongs to the universal ribosomal protein uL1 family. In terms of assembly, part of the 50S ribosomal subunit.

Functionally, binds directly to 23S rRNA. The L1 stalk is quite mobile in the ribosome, and is involved in E site tRNA release. In terms of biological role, protein L1 is also a translational repressor protein, it controls the translation of the L11 operon by binding to its mRNA. This is Large ribosomal subunit protein uL1 from Salinispora tropica (strain ATCC BAA-916 / DSM 44818 / JCM 13857 / NBRC 105044 / CNB-440).